The primary structure comprises 334 residues: Ketol-acid reductoisomerase (NADP(+)) (334 aa).

The 181-residue stretch at 3-183 folds into the KARI N-terminal Rossmann domain; that stretch reads ATIYYENDAD…GGTRGGVIET (181 aa). NADP(+)-binding positions include 26-29, arginine 49, serine 52, and 84-87; these read YGSQ and DEVQ. The active site involves histidine 109. Residue glycine 135 participates in NADP(+) binding. A KARI C-terminal knotted domain is found at 184–329; the sequence is TFAEETETDL…LGLRRMMNWI (146 aa). Mg(2+) contacts are provided by aspartate 192, glutamate 196, glutamate 228, and glutamate 232. Serine 253 serves as a coordination point for substrate.

Belongs to the ketol-acid reductoisomerase family. Requires Mg(2+) as cofactor.

It catalyses the reaction (2R)-2,3-dihydroxy-3-methylbutanoate + NADP(+) = (2S)-2-acetolactate + NADPH + H(+). The enzyme catalyses (2R,3R)-2,3-dihydroxy-3-methylpentanoate + NADP(+) = (S)-2-ethyl-2-hydroxy-3-oxobutanoate + NADPH + H(+). The protein operates within amino-acid biosynthesis; L-isoleucine biosynthesis; L-isoleucine from 2-oxobutanoate: step 2/4. Its pathway is amino-acid biosynthesis; L-valine biosynthesis; L-valine from pyruvate: step 2/4. Its function is as follows. Involved in the biosynthesis of branched-chain amino acids (BCAA). Catalyzes an alkyl-migration followed by a ketol-acid reduction of (S)-2-acetolactate (S2AL) to yield (R)-2,3-dihydroxy-isovalerate. In the isomerase reaction, S2AL is rearranged via a Mg-dependent methyl migration to produce 3-hydroxy-3-methyl-2-ketobutyrate (HMKB). In the reductase reaction, this 2-ketoacid undergoes a metal-dependent reduction by NADPH to yield (R)-2,3-dihydroxy-isovalerate. The protein is Ketol-acid reductoisomerase (NADP(+)) of Rhodopirellula baltica (strain DSM 10527 / NCIMB 13988 / SH1).